We begin with the raw amino-acid sequence, 200 residues long: Holliday junction branch migration complex subunit RuvA (200 aa).

Positions M1–L63 are domain I. The interval T64–K142 is domain II. Residues K142 to N146 form a flexible linker region. The domain III stretch occupies residues I147 to F200.

The protein belongs to the RuvA family. In terms of assembly, homotetramer. Forms an RuvA(8)-RuvB(12)-Holliday junction (HJ) complex. HJ DNA is sandwiched between 2 RuvA tetramers; dsDNA enters through RuvA and exits via RuvB. An RuvB hexamer assembles on each DNA strand where it exits the tetramer. Each RuvB hexamer is contacted by two RuvA subunits (via domain III) on 2 adjacent RuvB subunits; this complex drives branch migration. In the full resolvosome a probable DNA-RuvA(4)-RuvB(12)-RuvC(2) complex forms which resolves the HJ.

It is found in the cytoplasm. In terms of biological role, the RuvA-RuvB-RuvC complex processes Holliday junction (HJ) DNA during genetic recombination and DNA repair, while the RuvA-RuvB complex plays an important role in the rescue of blocked DNA replication forks via replication fork reversal (RFR). RuvA specifically binds to HJ cruciform DNA, conferring on it an open structure. The RuvB hexamer acts as an ATP-dependent pump, pulling dsDNA into and through the RuvAB complex. HJ branch migration allows RuvC to scan DNA until it finds its consensus sequence, where it cleaves and resolves the cruciform DNA. The sequence is that of Holliday junction branch migration complex subunit RuvA from Rickettsia typhi (strain ATCC VR-144 / Wilmington).